We begin with the raw amino-acid sequence, 67 residues long: Large ribosomal subunit protein bL32 (67 aa).

Over residues 1-19 (MAVPKRKMSRSNTRSRRSQ) the composition is skewed to basic residues. Residues 1–22 (MAVPKRKMSRSNTRSRRSQWKA) are disordered.

This sequence belongs to the bacterial ribosomal protein bL32 family.

This Kineococcus radiotolerans (strain ATCC BAA-149 / DSM 14245 / SRS30216) protein is Large ribosomal subunit protein bL32.